Here is a 330-residue protein sequence, read N- to C-terminus: MATKWGICSAGKISNDFVVALSTLPAVDHQVVAIAARDLEKAKNFAQNHNIPKAYGSYEELAKDPDIDVIYVGAIHPVHRDVVLMCLQNGKNILCEKPLAMNAAQVQELIATARKFNVFLMEAFWSRFFPVYEEIRALLSQKAIGDVKFIRAEFGVEIYKVPRAVEKELGGGALLDIGCYCVQFVTMVFNGERPESVTAKGFLHETGVDESMSLILQYSGKRQAVLSSTIMATLPNQAAICGTKGIIQIPSDMWSPTSIIVNGKERKFDIPHTTKPMNFSNGTGMSYEAEHVRQCLLKGLKESPIMSLADSEMVASIMDEALQQLGVTYP.

The protein belongs to the Gfo/Idh/MocA family. Homodimer.

The enzyme catalyses (1R,2R)-1,2-dihydrobenzene-1,2-diol + NADP(+) = catechol + NADPH + H(+). The catalysed reaction is D-xylose + NADP(+) = D-xylono-1,5-lactone + NADPH + H(+). This Xenopus tropicalis (Western clawed frog) protein is Trans-1,2-dihydrobenzene-1,2-diol dehydrogenase (dhdh).